Here is a 108-residue protein sequence, read N- to C-terminus: Trp operon repressor homolog (108 aa).

Residues 59–82 (QRQISQLLGVGVATITRGSNELKS) mediate DNA binding.

Belongs to the TrpR family. In terms of assembly, homodimer.

Its subcellular location is the cytoplasm. Its function is as follows. This protein is an aporepressor. When complexed with L-tryptophan it binds the operator region of the trp operon and prevents the initiation of transcription. The chain is Trp operon repressor homolog from Aliivibrio salmonicida (strain LFI1238) (Vibrio salmonicida (strain LFI1238)).